Consider the following 408-residue polypeptide: SERPINE1 mRNA-binding protein 1 (408 aa).

Serine 25 carries the post-translational modification Phosphoserine. 2 disordered regions span residues 33-292 and 328-408; these read AAEN…TLDE and SKSE…PALA. Positions 51–68 are enriched in low complexity; that stretch reads AKSAAQAAAQTNSNAAGK. Lysine 52 carries the post-translational modification N6-acetyllysine; alternate. A Glycyl lysine isopeptide (Lys-Gly) (interchain with G-Cter in SUMO1); alternate cross-link involves residue lysine 52. Position 68 is an N6-acetyllysine (lysine 68). Basic and acidic residues-rich tracts occupy residues 70–80, 89–114, and 122–162; these read LRKESQKDRKN, VDKK…RRPD, and KIID…DRPI. Lysine 102 participates in a covalent cross-link: Glycyl lysine isopeptide (Lys-Gly) (interchain with G-Cter in SUMO1); alternate. Residue lysine 102 forms a Glycyl lysine isopeptide (Lys-Gly) (interchain with G-Cter in SUMO2); alternate linkage. An N6-acetyllysine mark is found at lysine 122 and lysine 140. Gly residues predominate over residues 164-182; sequence GRGGLGRGRGGRGRGMGRG. 2 positions are modified to omega-N-methylarginine: arginine 165 and arginine 188. Residues 183 to 199 are compositionally biased toward basic and acidic residues; the sequence is DGFDSRGKREFDRHSGS. The residue at position 197 (serine 197) is a Phosphoserine. Position 199 is a phosphoserine; by MTOR (serine 199). Serine 203, serine 205, and serine 208 each carry phosphoserine. An N6-acetyllysine; alternate modification is found at lysine 211. Lysine 211 participates in a covalent cross-link: Glycyl lysine isopeptide (Lys-Gly) (interchain with G-Cter in SUMO2); alternate. At arginine 216 the chain carries Omega-N-methylarginine. Phosphoserine is present on serine 221. Histidine 222 is covalently cross-linked (Glycyl lysine isopeptide (Lys-Gly) (interchain with G-Cter in SUMO2)). Threonine 226 carries the phosphothreonine; by MTOR modification. A Glycyl lysine isopeptide (Lys-Gly) (interchain with G-Cter in SUMO1); alternate cross-link involves residue lysine 228. Residue lysine 228 forms a Glycyl lysine isopeptide (Lys-Gly) (interchain with G-Cter in SUMO2); alternate linkage. Residue lysine 228 forms a Glycyl lysine isopeptide (Lys-Gly) (interchain with G-Cter in SUMO2) linkage. 3 positions are modified to phosphoserine: leucine 231, serine 234, and tyrosine 237. Position 234 is a phosphothreonine (serine 234). Lysine 240 bears the Phosphothreonine mark. The span at 240-253 shows a compositional bias: polar residues; the sequence is KQISYNYSDLDQSN. Positions 261 to 275 are enriched in basic and acidic residues; sequence GEEHHPVADTENKEN. Lysine 281 participates in a covalent cross-link: Glycyl lysine isopeptide (Lys-Gly) (interchain with G-Cter in SUMO1); alternate. Lysine 281 participates in a covalent cross-link: Glycyl lysine isopeptide (Lys-Gly) (interchain with G-Cter in SUMO2); alternate. Basic and acidic residues-rich tracts occupy residues 282-292 and 328-342; these read EEGPKEMTLDE and SKSE…VMDH. Position 329 is an N6-acetyllysine (lysine 329). Serine 330 is subject to Phosphoserine. Gly residues predominate over residues 363 to 372; that stretch reads GRPGRGGRGG. Omega-N-methylarginine occurs at positions 364, 367, and 370. Residues serine 392 and serine 394 each carry the phosphoserine modification.

This sequence belongs to the SERBP1-HABP4 family. As to quaternary structure, associates with mature 80S ribosomes. Interacts with EEF2/eEF2; interaction sequesters EEF2/eEF2 at the A-site of the ribosome, thereby blocking the interaction sites of the mRNA-tRNA complex, promoting ribosome stabilization and hibernation. Interacts with SPIN1. Interacts with CHD3 and TDRD3. Interacts with ZDHHC17 (via ANK repeats). In terms of processing, phosphorylation by MTOR inhibits SERBP1 and relieves ribosome hibernation. Expressed at high level in the heart, skeletal muscle and kidney, and at low levels in placenta, liver and brain.

The protein resides in the cytoplasm. It is found in the nucleus. Its subcellular location is the perinuclear region. In terms of biological role, ribosome-binding protein that promotes ribosome hibernation, a process during which ribosomes are stabilized in an inactive state and preserved from proteasomal degradation. Acts via its association with EEF2/eEF2 factor, sequestering EEF2/eEF2 at the A-site of the ribosome and promoting ribosome stabilization and storage in an inactive state. May also play a role in the regulation of mRNA stability: binds to the 3'-most 134 nt of the SERPINE1/PAI1 mRNA, a region which confers cyclic nucleotide regulation of message decay. Seems to play a role in PML-nuclear bodies formation. In Homo sapiens (Human), this protein is SERPINE1 mRNA-binding protein 1.